The primary structure comprises 863 residues: MDCVKLVFLMLYTFLCQLALSSSLPHLCPEDQALSLLQFKNMFTINPNASDYCYDIRTYVDIQSYPRTLSWNKSTSCCSWDGVHCDETTGQVIALDLRCSQLQGKFHSNSSLFQLSNLKRLDLSFNNFTGSLISPKFGEFSNLTHLDLSHSSFTGLIPSEICHLSKLHVLRICDQYGLSLVPYNFELLLKNLTQLRELNLESVNISSTIPSNFSSHLTTLQLSGTELHGILPERVFHLSNLQSLHLSVNPQLTVRFPTTKWNSSASLMTLYVDSVNIADRIPKSFSHLTSLHELYMGRCNLSGPIPKPLWNLTNIVFLHLGDNHLEGPISHFTIFEKLKRLSLVNNNFDGGLEFLSFNTQLERLDLSSNSLTGPIPSNISGLQNLECLYLSSNHLNGSIPSWIFSLPSLVELDLSNNTFSGKIQEFKSKTLSAVTLKQNKLKGRIPNSLLNQKNLQLLLLSHNNISGHISSAICNLKTLILLDLGSNNLEGTIPQCVVERNEYLSHLDLSKNRLSGTINTTFSVGNILRVISLHGNKLTGKVPRSMINCKYLTLLDLGNNMLNDTFPNWLGYLFQLKILSLRSNKLHGPIKSSGNTNLFMGLQILDLSSNGFSGNLPERILGNLQTMKEIDESTGFPEYISDPYDIYYNYLTTISTKGQDYDSVRILDSNMIINLSKNRFEGHIPSIIGDLVGLRTLNLSHNVLEGHIPASFQNLSVLESLDLSSNKISGEIPQQLASLTFLEVLNLSHNHLVGCIPKGKQFDSFGNTSYQGNDGLRGFPLSKLCGGEDQVTTPAELDQEEEEEDSPMISWQGVLVGYGCGLVIGLSVIYIMWSTQYPAWFSRMDLKLEHIITTKMKKHKKRY.

The signal sequence occupies residues methionine 1 to serine 21. The Extracellular portion of the chain corresponds to serine 22 to glutamine 812. The tract at residues leucine 24–glutamine 91 is N-cap. N-linked (GlcNAc...) asparagine glycans are attached at residues asparagine 48, asparagine 72, asparagine 109, asparagine 127, asparagine 142, asparagine 191, asparagine 204, and asparagine 212. One copy of the LRR 1; degenerate repeat lies at valine 92–leucine 115. LRR repeat units lie at residues serine 116–glutamate 139 and serine 141–leucine 164. The LRR 4; degenerate repeat unit spans residues serine 165 to asparagine 191. LRR repeat units lie at residues leucine 192–serine 214, serine 215–leucine 238, leucine 241–serine 263, alanine 265–histidine 287, leucine 288–leucine 312, asparagine 314–phenylalanine 335, glutamate 336–asparagine 358, threonine 359–leucine 382, glutamine 383–leucine 406, serine 408–serine 428, lysine 429–glutamine 452, asparagine 454–leucine 476, lysine 477–arginine 500, glutamate 502–valine 524, glycine 525–cysteine 549, tyrosine 551–tyrosine 572, leucine 573–asparagine 597, phenylalanine 599–asparagine 623, leucine 667–aspartate 690, leucine 691–asparagine 714, leucine 715–leucine 739, and phenylalanine 741–glycine 759. Asparagine 262 carries N-linked (GlcNAc...) asparagine glycosylation. N-linked (GlcNAc...) asparagine glycans are attached at residues asparagine 300 and asparagine 311. 3 N-linked (GlcNAc...) asparagine glycosylation sites follow: asparagine 378, asparagine 396, and asparagine 416. Asparagine 464 carries N-linked (GlcNAc...) asparagine glycosylation. Residue asparagine 519 is glycosylated (N-linked (GlcNAc...) asparagine). Asparagine 563 carries an N-linked (GlcNAc...) asparagine glycan. Asparagine 698 and asparagine 714 each carry an N-linked (GlcNAc...) asparagine glycan. N-linked (GlcNAc...) asparagine glycans are attached at residues asparagine 746 and asparagine 767. The interval lysine 760–glutamine 812 is C-cap/acidic domain. The helical transmembrane segment at glycine 813–tryptophan 833 threads the bilayer. Residues serine 834–tyrosine 863 are Cytoplasmic-facing.

It belongs to the RLP family. As to quaternary structure, interacts with thioredoxin-like protein CITRX.

The protein localises to the cell membrane. Its function is as follows. Involved in plant defense. Confers resistance to the fungal pathogen C.fulvum through recognition of the AVR9 elicitor protein. This chain is Receptor-like protein Cf-9, found in Solanum pimpinellifolium (Currant tomato).